The following is a 404-amino-acid chain: Deoxyguanosinetriphosphate triphosphohydrolase-like protein (404 aa).

The disordered stretch occupies residues 1–33 (MSVGMAAPRAAFSCDPDRSRGRQFAEPPSSNRS). The HD domain occupies 69–217 (RLTHSLEVAQ…AALADDIAYD (149 aa)).

This sequence belongs to the dGTPase family. Type 2 subfamily.

This chain is Deoxyguanosinetriphosphate triphosphohydrolase-like protein, found in Rhodopseudomonas palustris (strain HaA2).